The sequence spans 191 residues: Flagellar transcriptional regulator FlhC (191 aa).

C137, C140, C157, and C160 together coordinate Zn(2+).

Belongs to the FlhC family. As to quaternary structure, heterohexamer composed of two FlhC and four FlhD subunits. Each FlhC binds a FlhD dimer, forming a heterotrimer, and a hexamer assembles by dimerization of two heterotrimers. Zn(2+) is required as a cofactor.

It is found in the cytoplasm. Its function is as follows. Functions in complex with FlhD as a master transcriptional regulator that regulates transcription of several flagellar and non-flagellar operons by binding to their promoter region. Activates expression of class 2 flagellar genes, including fliA, which is a flagellum-specific sigma factor that turns on the class 3 genes. Also regulates genes whose products function in a variety of physiological pathways. The polypeptide is Flagellar transcriptional regulator FlhC (Nitrosomonas eutropha (strain DSM 101675 / C91 / Nm57)).